We begin with the raw amino-acid sequence, 486 residues long: UDP-N-acetylmuramate--L-alanine ligase (486 aa).

ATP is bound at residue 129–135; the sequence is GTHGKTT.

This sequence belongs to the MurCDEF family.

It is found in the cytoplasm. The enzyme catalyses UDP-N-acetyl-alpha-D-muramate + L-alanine + ATP = UDP-N-acetyl-alpha-D-muramoyl-L-alanine + ADP + phosphate + H(+). It participates in cell wall biogenesis; peptidoglycan biosynthesis. Functionally, cell wall formation. In Vibrio cholerae serotype O1 (strain ATCC 39315 / El Tor Inaba N16961), this protein is UDP-N-acetylmuramate--L-alanine ligase.